The sequence spans 399 residues: Argininosuccinate synthase (399 aa).

Position 9–17 (9–17 (AYSGGLDTS)) interacts with ATP. An L-citrulline-binding site is contributed by Tyr85. Gly115 provides a ligand contact to ATP. L-aspartate-binding residues include Thr117, Asn121, and Asp122. Asn121 contacts L-citrulline. Residues Arg125, Ser173, Glu258, and Tyr270 each coordinate L-citrulline.

The protein belongs to the argininosuccinate synthase family. Type 1 subfamily. Homotetramer.

It localises to the cytoplasm. The catalysed reaction is L-citrulline + L-aspartate + ATP = 2-(N(omega)-L-arginino)succinate + AMP + diphosphate + H(+). Its pathway is amino-acid biosynthesis; L-arginine biosynthesis; L-arginine from L-ornithine and carbamoyl phosphate: step 2/3. The chain is Argininosuccinate synthase from Streptococcus uberis (strain ATCC BAA-854 / 0140J).